A 647-amino-acid chain; its full sequence is Protein cueball (647 aa).

The N-terminal stretch at 1–22 is a signal peptide; that stretch reads MLWCPSVLVPLIAVAACLPVLA. Over 23–534 the chain is Extracellular; that stretch reads IGTPLEWEFA…CMTPSPWTSN (512 aa). Residues Asn80 and Asn106 are each glycosylated (N-linked (GlcNAc...) asparagine). LDL-receptor class B repeat units lie at residues 119-166, 167-211, and 212-257; these read RNLF…DVCR, RKLY…DQLS, and DRIF…TNDA. Asn175 carries N-linked (GlcNAc...) asparagine glycosylation. Residue Asn316 is glycosylated (N-linked (GlcNAc...) asparagine). EGF-like domains lie at 365-401 and 436-473; these read DEKT…SRCE and EISK…ERCE. 5 disulfide bridges follow: Cys376–Cys389, Cys391–Cys400, Cys440–Cys450, Cys444–Cys461, and Cys463–Cys472. Residue Asn475 is glycosylated (N-linked (GlcNAc...) asparagine). Residues 535 to 555 form a helical membrane-spanning segment; that stretch reads VIIVLVLGIVSCFFLVAVIVH. The Cytoplasmic segment spans residues 556-647; it reads GFRRLYKPKR…LIHNMDDDLY (92 aa).

This sequence belongs to the cueball family.

The protein resides in the cell membrane. Has a role in spermatogenesis and oogenesis. The protein is Protein cueball of Drosophila persimilis (Fruit fly).